Consider the following 451-residue polypeptide: Tubulin alpha-1 chain (451 aa).

Q11 serves as a coordination point for GTP. N6-acetyllysine is present on K40. GTP-binding residues include E71, G144, T145, T179, N206, and N228. E71 lines the Mg(2+) pocket. The active site involves E254.

It belongs to the tubulin family. Dimer of alpha and beta chains. A typical microtubule is a hollow water-filled tube with an outer diameter of 25 nm and an inner diameter of 15 nM. Alpha-beta heterodimers associate head-to-tail to form protofilaments running lengthwise along the microtubule wall with the beta-tubulin subunit facing the microtubule plus end conferring a structural polarity. Microtubules usually have 13 protofilaments but different protofilament numbers can be found in some organisms and specialized cells. It depends on Mg(2+) as a cofactor. Post-translationally, undergoes a tyrosination/detyrosination cycle, the cyclic removal and re-addition of a C-terminal tyrosine residue by the enzymes tubulin tyrosine carboxypeptidase (TTCP) and tubulin tyrosine ligase (TTL), respectively. In terms of processing, acetylation of alpha chains at Lys-40 stabilizes microtubules and affects affinity and processivity of microtubule motors. This modification has a role in multiple cellular functions, ranging from cell motility, cell cycle progression or cell differentiation to intracellular trafficking and signaling.

It is found in the cytoplasm. Its subcellular location is the cytoskeleton. It carries out the reaction GTP + H2O = GDP + phosphate + H(+). In terms of biological role, tubulin is the major constituent of microtubules, a cylinder consisting of laterally associated linear protofilaments composed of alpha- and beta-tubulin heterodimers. Microtubules grow by the addition of GTP-tubulin dimers to the microtubule end, where a stabilizing cap forms. Below the cap, tubulin dimers are in GDP-bound state, owing to GTPase activity of alpha-tubulin. This Chlamydomonas reinhardtii (Chlamydomonas smithii) protein is Tubulin alpha-1 chain (TUBA1).